Reading from the N-terminus, the 1422-residue chain is YEATS domain-containing protein 2 (1422 aa).

A Glycyl lysine isopeptide (Lys-Gly) (interchain with G-Cter in SUMO2) cross-link involves residue Lys9. Residues 47-80 adopt a coiled-coil conformation; it reads KEQFALEMKNKEHEIEVIDQRLIEARRMMDKLRA. Residue Lys113 forms a Glycyl lysine isopeptide (Lys-Gly) (interchain with G-Cter in SUMO2) linkage. The disordered stretch occupies residues 117-198; it reads ESPSRSSSPA…KTEQRNADLT (82 aa). Residues Ser118, Ser120, and Ser157 each carry the phosphoserine modification. Polar residues predominate over residues 119-148; the sequence is PSRSSSPANQRAETPSANHSESDSLSQHND. Residues 149-165 show a composition bias toward basic and acidic residues; sequence FLSDKDNNSNMDIEERL. The span at 166–176 shows a compositional bias: polar residues; sequence SNNMEQRPSRN. The span at 177 to 198 shows a compositional bias: basic and acidic residues; that stretch reads TGRDTSRITGSHKTEQRNADLT. Residue Lys189 forms a Glycyl lysine isopeptide (Lys-Gly) (interchain with G-Cter in SUMO2) linkage. The YEATS domain maps to 200–345; it reads ETSRLFVKKT…EDCIYPQSSE (146 aa). Histone H3K27cr binding regions lie at residues 259 to 261 and 282 to 284; these read HPS and WGE. A Glycyl lysine isopeptide (Lys-Gly) (interchain with G-Cter in SUMO2) cross-link involves residue Lys370. Thr407 carries the post-translational modification Phosphothreonine. Phosphoserine occurs at positions 447, 463, 465, 471, and 473. The interval 465-486 is disordered; it reads SPISTPSPSPLPRTPTSTPVHV. Thr478 is subject to Phosphothreonine. A Glycyl lysine isopeptide (Lys-Gly) (interchain with G-Cter in SUMO2) cross-link involves residue Lys487. The segment covering 513–535 has biased composition (polar residues); it reads TTPSTGSPTNKISTASQVSQGTG. A disordered region spans residues 513–540; sequence TTPSTGSPTNKISTASQVSQGTGSPVPK. Phosphoserine is present on Ser536. A Glycyl lysine isopeptide (Lys-Gly) (interchain with G-Cter in SUMO2) cross-link involves residue Lys552. Ser575 is subject to Phosphoserine. Lys592 participates in a covalent cross-link: Glycyl lysine isopeptide (Lys-Gly) (interchain with G-Cter in SUMO2). Ser627 is subject to Phosphoserine. Residues Lys649 and Lys773 each participate in a glycyl lysine isopeptide (Lys-Gly) (interchain with G-Cter in SUMO2) cross-link. The segment at 794-842 is disordered; sequence GSAASGGSGAGGGGGGGGGGGSGSGGGGSTGGGGGTAGGGTQSTAGPGG. Residues 797–842 show a composition bias toward gly residues; sequence ASGGSGAGGGGGGGGGGGSGSGGGGSTGGGGGTAGGGTQSTAGPGG. Lys923 participates in a covalent cross-link: Glycyl lysine isopeptide (Lys-Gly) (interchain with G-Cter in SUMO2). A Glycyl lysine isopeptide (Lys-Gly) (interchain with G-Cter in SUMO1); alternate cross-link involves residue Lys1110. Lys1110 is covalently cross-linked (Glycyl lysine isopeptide (Lys-Gly) (interchain with G-Cter in SUMO2); alternate). A Glycyl lysine isopeptide (Lys-Gly) (interchain with G-Cter in SUMO2) cross-link involves residue Lys1130. Thr1219 carries the phosphothreonine modification. Glycyl lysine isopeptide (Lys-Gly) (interchain with G-Cter in SUMO2) cross-links involve residues Lys1222 and Lys1285.

As to quaternary structure, component of the ADA2A-containing complex (ATAC), composed of KAT14, KAT2A, TADA2L, TADA3L, ZZ3, MBIP, WDR5, YEATS2, SGF29 and DR1.

The protein localises to the nucleus. Its function is as follows. Chromatin reader component of the ATAC complex, a complex with histone acetyltransferase activity on histones H3 and H4. YEATS2 specifically recognizes and binds histone H3 crotonylated at 'Lys-27' (H3K27cr). Crotonylation marks active promoters and enhancers and confers resistance to transcriptional repressors. The protein is YEATS domain-containing protein 2 of Homo sapiens (Human).